The following is a 132-amino-acid chain: Holo-[acyl-carrier-protein] synthase (132 aa).

Residues D8 and E64 each coordinate Mg(2+).

This sequence belongs to the P-Pant transferase superfamily. AcpS family. The cofactor is Mg(2+).

Its subcellular location is the cytoplasm. It catalyses the reaction apo-[ACP] + CoA = holo-[ACP] + adenosine 3',5'-bisphosphate + H(+). In terms of biological role, transfers the 4'-phosphopantetheine moiety from coenzyme A to a Ser of acyl-carrier-protein. This Shewanella sediminis (strain HAW-EB3) protein is Holo-[acyl-carrier-protein] synthase.